The following is a 119-amino-acid chain: Nucleoid-associated protein Cphy_0047 (119 aa).

The tract at residues Ala23 to Thr45 is disordered. Over residues Lys28–Trp42 the composition is skewed to basic and acidic residues.

This sequence belongs to the YbaB/EbfC family. As to quaternary structure, homodimer.

It localises to the cytoplasm. Its subcellular location is the nucleoid. In terms of biological role, binds to DNA and alters its conformation. May be involved in regulation of gene expression, nucleoid organization and DNA protection. This Lachnoclostridium phytofermentans (strain ATCC 700394 / DSM 18823 / ISDg) (Clostridium phytofermentans) protein is Nucleoid-associated protein Cphy_0047.